The sequence spans 152 residues: Deoxyuridine 5'-triphosphate nucleotidohydrolase (152 aa).

Residues 71-73, Asn-84, 88-90, and Met-98 each bind substrate; these read RSG and LID.

It belongs to the dUTPase family. It depends on Mg(2+) as a cofactor.

The catalysed reaction is dUTP + H2O = dUMP + diphosphate + H(+). The protein operates within pyrimidine metabolism; dUMP biosynthesis; dUMP from dCTP (dUTP route): step 2/2. Functionally, this enzyme is involved in nucleotide metabolism: it produces dUMP, the immediate precursor of thymidine nucleotides and it decreases the intracellular concentration of dUTP so that uracil cannot be incorporated into DNA. This is Deoxyuridine 5'-triphosphate nucleotidohydrolase from Shewanella baltica (strain OS155 / ATCC BAA-1091).